The sequence spans 303 residues: Sodium/potassium-transporting ATPase subunit beta-1 (303 aa).

Residues Met1 to Lys34 lie on the Cytoplasmic side of the membrane. Residues Ile35–Gln55 form a helical; Signal-anchor for type II membrane protein membrane-spanning segment. Over Ala56–Ser303 the chain is Extracellular. N-linked (GlcNAc...) asparagine glycosylation occurs at Asn113. 2 cysteine pairs are disulfide-bonded: Cys126–Cys149 and Cys159–Cys175. N-linked (GlcNAc...) asparagine glycans are attached at residues Asn194 and Asn264. Cysteines 214 and 275 form a disulfide.

The protein belongs to the X(+)/potassium ATPases subunit beta family. As to quaternary structure, the sodium/potassium-transporting ATPase is composed of a catalytic alpha subunit, an auxiliary non-catalytic beta subunit and an additional regulatory subunit. Detected in all tissues except liver and cardiac muscle. Highest levels found in intestine, ovary and kidney with marginally lower levels in brain, spleen, esophagus, eye and pancreas, intermediate levels in gill and low levels in white and red skeletal muscle.

The protein localises to the cell membrane. Functionally, this is the non-catalytic component of the active enzyme, which catalyzes the hydrolysis of ATP coupled with the exchange of Na(+) and K(+) ions across the plasma membrane. The beta subunit regulates, through assembly of alpha/beta heterodimers, the number of sodium pumps transported to the plasma membrane. The chain is Sodium/potassium-transporting ATPase subunit beta-1 (atp1b1) from Anguilla anguilla (European freshwater eel).